The chain runs to 74 residues: CLAVATA3/ESR (CLE)-related protein 1 (74 aa).

Positions 1–22 are cleaved as a signal peptide; that stretch reads MANLKFLLCLFLICVSLSRSSA. N-linked (GlcNAc...) asparagine glycosylation occurs at N59. 2 positions are modified to hydroxyproline: P66 and P69. An O-linked (Ara...) hydroxyproline glycan is attached at P69.

The protein belongs to the CLV3/ESR signal peptide family. The O-glycosylation (arabinosylation) of the hydroxyproline Pro-69 enhances binding affinity of the CLE1p peptide for its receptor. Mostly expressed in roots and seedlings, and, to a lower extent, in stems and apex.

It is found in the secreted. The protein resides in the extracellular space. In terms of biological role, extracellular signal peptide that regulates cell fate. The protein is CLAVATA3/ESR (CLE)-related protein 1 of Arabidopsis thaliana (Mouse-ear cress).